We begin with the raw amino-acid sequence, 81 residues long: D-alanyl carrier protein (81 aa).

Positions 1–81 (MADEAIKNGV…KIIAKVEQAQ (81 aa)) constitute a Carrier domain. An O-(pantetheine 4'-phosphoryl)serine modification is found at serine 39.

This sequence belongs to the DltC family. Post-translationally, 4'-phosphopantetheine is transferred from CoA to a specific serine of apo-DCP.

The protein resides in the cytoplasm. The protein operates within cell wall biogenesis; lipoteichoic acid biosynthesis. In terms of biological role, carrier protein involved in the D-alanylation of lipoteichoic acid (LTA). The loading of thioester-linked D-alanine onto DltC is catalyzed by D-alanine--D-alanyl carrier protein ligase DltA. The DltC-carried D-alanyl group is further transferred to cell membrane phosphatidylglycerol (PG) by forming an ester bond, probably catalyzed by DltD. D-alanylation of LTA plays an important role in modulating the properties of the cell wall in Gram-positive bacteria, influencing the net charge of the cell wall. The chain is D-alanyl carrier protein from Lacticaseibacillus casei (strain BL23) (Lactobacillus casei).